The primary structure comprises 252 residues: MLKPKKTFGQNFLKSKNIAHSIVELLDVKEDDTVIEIGPGLGALTEFLYQKPKKELILVELDKDIFGLLEKKYKNATLLNEDASLVDLSSYKNLKIIGNLPYNMYASILINMINQEKHISKMVFMLQKEVGERLITDSKDKSWLWAYANTYFNIHYAFSVPGRFFEPVPKVTSCVLVFDKKEDTPSFEKQNYMDFLKKMFSNRRKMLKHKLNNIEDKYALKRVEELSLEDIKYIYNTLSCFNKNIFTSTPAL.

S-adenosyl-L-methionine-binding residues include N11, L13, G38, E60, D82, and N99.

The protein belongs to the class I-like SAM-binding methyltransferase superfamily. rRNA adenine N(6)-methyltransferase family. RsmA subfamily.

The protein resides in the cytoplasm. It catalyses the reaction adenosine(1518)/adenosine(1519) in 16S rRNA + 4 S-adenosyl-L-methionine = N(6)-dimethyladenosine(1518)/N(6)-dimethyladenosine(1519) in 16S rRNA + 4 S-adenosyl-L-homocysteine + 4 H(+). Specifically dimethylates two adjacent adenosines (A1518 and A1519) in the loop of a conserved hairpin near the 3'-end of 16S rRNA in the 30S particle. May play a critical role in biogenesis of 30S subunits. This chain is Ribosomal RNA small subunit methyltransferase A, found in Hydrogenobaculum sp. (strain Y04AAS1).